We begin with the raw amino-acid sequence, 383 residues long: Aquaporin-5 (383 aa).

The Cytoplasmic segment spans residues 1-46 (MSVTTLNGQPTLNISGPGQTALSRLDPLKKVFTKFFSSIPQKVRGH). A helical transmembrane segment spans residues 47–67 (VVAVIGELIGTTAFLFIAFSA). Over 68–93 (AEVALASANDNKGDKVSYETKSISTT) the chain is Extracellular. Residues 94–114 (QILFIAFGAGISLVVNAWTFF) traverse the membrane as a helical segment. Residue Arg-115 is a topological domain, cytoplasmic. The helical transmembrane segment at 116–136 (ISGGLFDPAVSIALFFVGAID) threads the bilayer. An NPA 1 motif is present at residues 122–124 (DPA). Residues 137–140 (LTRC) lie on the Extracellular side of the membrane. A helical membrane pass occupies residues 141 to 161 (VLLCIAQCLGAIAASAMAYGL). At 162 to 180 (YHGGLHTATTLKPGMSPAQ) the chain is on the cytoplasmic side. A helical transmembrane segment spans residues 181–201 (GVIVEMILTCQLCFTVLMLAA). Residues 202 to 207 (EKHEAT) are Extracellular-facing. Residues 208 to 228 (FLAPLGIGLSVFIGELAGVFW) form a helical membrane-spanning segment. The Cytoplasmic portion of the chain corresponds to 229-252 (TGGSMNPARSLGPAVVTLSFPSYH). The NPA 2 signature appears at 234 to 236 (NPA). The chain crosses the membrane as a helical span at residues 253–273 (WIYWVGPIAGAGLASIIYKLI). Topologically, residues 274–383 (KALEYETAQL…DGFFGEMYAD (110 aa)) are extracellular. Residues 332–349 (ARKSSSLVPTKSTKSGNS) show a composition bias toward polar residues. Residues 332 to 383 (ARKSSSLVPTKSTKSGNSEVKKTETVVEEPAKTQPKPAPAADDGFFGEMYAD) are disordered. A compositionally biased stretch (basic and acidic residues) spans 350–362 (EVKKTETVVEEPA). Low complexity predominate over residues 363–372 (KTQPKPAPAA).

Belongs to the MIP/aquaporin (TC 1.A.8) family.

The protein localises to the membrane. It catalyses the reaction H2O(in) = H2O(out). Water channel required to facilitate the transport of water across membranes. May play a role in the vegetative growth. The chain is Aquaporin-5 from Botryotinia fuckeliana (strain B05.10) (Noble rot fungus).